We begin with the raw amino-acid sequence, 150 residues long: uncharacterized protein (150 aa).

The signal sequence occupies residues 1–23; it reads MYSILIACLVLLLCLIIYVGHRA.

The protein belongs to the asfivirus EP152R family.

It is found in the virion. This is an uncharacterized protein from African swine fever virus (isolate Warthog/Namibia/Wart80/1980) (ASFV).